A 396-amino-acid chain; its full sequence is 2-methyl-aconitate isomerase (396 aa).

Substrate is bound by residues serine 19 and 66–70; that span reads SSTSK. The active-site Proton donor/acceptor is cysteine 104. Cysteine sulfinic acid (-SO2H) is present on cysteine 104. Positions 106, 278, 309, and 314 each coordinate substrate. The Proton donor/acceptor role is filled by methionine 318. Glycine 319 is a substrate binding site.

It belongs to the PrpF family. Homodimer.

The enzyme catalyses 2-methyl-trans-aconitate = 2-methyl-cis-aconitate. It participates in organic acid metabolism; propanoate degradation. Its function is as follows. Catalyzes the isomerization of 2-methyl-trans-aconitate to yield 2-methyl-cis-aconitate through a base-catalyzed proton abstraction coupled with a rotation about C2-C3 bond of 2-methyl-aconitate. This chain is 2-methyl-aconitate isomerase, found in Cupriavidus necator (Alcaligenes eutrophus).